The primary structure comprises 51 residues: Ribosome biogenesis protein Nop10 (51 aa).

Belongs to the NOP10 family.

In terms of biological role, involved in ribosome biogenesis; more specifically in 18S rRNA pseudouridylation and in cleavage of pre-rRNA. This is Ribosome biogenesis protein Nop10 from Methanococcus maripaludis (strain C5 / ATCC BAA-1333).